Here is a 565-residue protein sequence, read N- to C-terminus: Tyrosine-protein phosphatase non-receptor type 5 (565 aa).

Over residues 1 to 16 (MNYEGARSERENHAAD) the composition is skewed to basic and acidic residues. The tract at residues 1 to 80 (MNYEGARSER…KPPPRGAGSH (80 aa)) is disordered. Residues 56–75 (MPPPPPPSPPSDPAQKPPPR) are compositionally biased toward pro residues. Helical transmembrane passes span 88–108 (LCLF…FSGY) and 146–166 (LLLV…WHLL). The tract at residues 169–189 (PPEPPTPLPPEDRRQSVSRQP) is disordered. The residue at position 245 (serine 245) is a Phosphoserine; by PKA. Threonine 255 is modified (phosphothreonine; by MAPK). A Phosphoserine; by MAPK modification is found at serine 268. In terms of domain architecture, Tyrosine-protein phosphatase spans 300–555 (LQAEFFEIPM…QFVHHVMSLY (256 aa)). Residues aspartate 461, 496 to 502 (CSAGIGR), and glutamine 540 contribute to the substrate site. Catalysis depends on cysteine 496, which acts as the Phosphocysteine intermediate.

Belongs to the protein-tyrosine phosphatase family. Non-receptor class subfamily. Phosphorylation at Ser-245 by PKA deactivates PTPN5. Phosphorylation at Thr-255 and Ser-268 by MAPKs stabilizes the phosphatase, dephosphorylation of these sites results in ubiquitin-mediated degradation of the active phosphatase.

The protein resides in the endoplasmic reticulum membrane. It catalyses the reaction O-phospho-L-tyrosyl-[protein] + H2O = L-tyrosyl-[protein] + phosphate. In terms of biological role, may regulate the activity of several effector molecules involved in synaptic plasticity and neuronal cell survival, including MAPKs, Src family kinases and NMDA receptors. The polypeptide is Tyrosine-protein phosphatase non-receptor type 5 (PTPN5) (Homo sapiens (Human)).